The chain runs to 789 residues: Alpha-glucosidase 2 (789 aa).

2 disordered regions span residues 1 to 24 and 512 to 531; these read MTGLSPSGDIKPLLDDESQRPRVI and ELNPQSLSSGLDDYPRASHP. Aspartate 523 (proton donor) is an active-site residue. The Proton acceptor role is filled by glutamate 756.

The protein belongs to the glycosyl hydrolase 63 family.

Its pathway is glycan metabolism; N-glycan degradation. This chain is Alpha-glucosidase 2 (GCS2), found in Arabidopsis thaliana (Mouse-ear cress).